A 313-amino-acid polypeptide reads, in one-letter code: E3 ubiquitin-protein ligase RNF126 (313 aa).

Alanine 2 is modified (N-acetylalanine). Position 5 is a phosphoserine (serine 5). Positions 5-100 (SPQPGRYFCH…FEIPTFPPGA (96 aa)) are required for interaction with BAG6. Zn(2+) contacts are provided by cysteine 13, cysteine 16, cysteine 29, and cysteine 32. The C4-type zinc finger occupies 13–32 (CHCCSVEIVPRLPDYICPRC). Disordered stretches follow at residues 42–63 (EETR…QNRQ) and 95–128 (TFPP…RQPR). Residues 47–63 (TENGSAPSTAPTDQNRQ) show a composition bias toward polar residues. The segment covering 103–116 (DDGRDPESRREREH) has biased composition (basic and acidic residues). The span at 117–128 (QSRHRYGARQPR) shows a compositional bias: basic residues. The sufficient for interaction with AICDA stretch occupies residues 202 to 306 (TGPPPADKEK…SSSSSSSPSN (105 aa)). The RING-type zinc finger occupies 231-272 (CPVCKEDYALGESVRQLPCNHLFHDSCIVPWLEQHDSCPVCR). Residues 279-313 (NTATNPPGLTGVGFSSSSSSSSSSSPSNENATSNS) are disordered. Over residues 293-313 (SSSSSSSSSSSPSNENATSNS) the composition is skewed to low complexity.

In terms of assembly, interacts with CCDC50, EGFR, FLT3 and SCAMP3. Interacts with BAG6 (via ubiquitin-like domain); required for BAG6-dependent ubiquitination of proteins mislocalized to the cytosol. Interacts with CDKN1A. Interacts with AICDA. Post-translationally, ubiquitinated. May undergo autoubiquitination. Detected in B-cells (at protein level).

Its subcellular location is the cytoplasm. The protein localises to the nucleus. It catalyses the reaction S-ubiquitinyl-[E2 ubiquitin-conjugating enzyme]-L-cysteine + [acceptor protein]-L-lysine = [E2 ubiquitin-conjugating enzyme]-L-cysteine + N(6)-ubiquitinyl-[acceptor protein]-L-lysine.. The protein operates within protein modification; protein ubiquitination. Its function is as follows. E3 ubiquitin-protein ligase that mediates ubiquitination oF target proteins. Depending on the associated E2 ligase, mediates 'Lys-27'-, 'Lys-29'-, 'Lys-48'- and/or 'Lys-63'-linked polyubiquitination of substrates. Part of a BAG6-dependent quality control process ensuring that proteins of the secretory pathway that are mislocalized to the cytosol are degraded by the proteasome. Probably acts by providing the ubiquitin ligase activity associated with the BAG6 complex and be responsible for ubiquitination of the hydrophobic mislocalized proteins and their targeting to the proteasome. May also play a role in the endosomal recycling of IGF2R, the cation-independent mannose-6-phosphate receptor. May play a role in the endosomal sorting and degradation of several membrane receptors including EGFR, FLT3, MET and CXCR4, by mediating their ubiquitination. By ubiquitinating CDKN1A/p21 and targeting it for degradation, may also promote cell proliferation. May monoubiquitinate AICDA. Acts as a regulator of DNA repair by mediating 'Lys-27'- and 'Lys-29'-linked polyubiquitination of MRE11, thereby promoting the exonuclease activity of MRE11. This Mus musculus (Mouse) protein is E3 ubiquitin-protein ligase RNF126.